The sequence spans 618 residues: 1-aminocyclopropane-1-carboxylate synthase-like protein 1 (618 aa).

Residues 11–26 (QGTQTPAAQTTCAPST) show a composition bias toward low complexity. The tract at residues 11-54 (QGTQTPAAQTTCAPSTMSSSSRPPLETLQAQSVSADETPGSALP) is disordered. Residues 27 to 45 (MSSSSRPPLETLQAQSVSA) are compositionally biased toward polar residues. Position 122 (Glu-122) interacts with substrate. Lys-340 is modified (N6-(pyridoxal phosphate)lysine).

Belongs to the class-I pyridoxal-phosphate-dependent aminotransferase family.

The sequence is that of 1-aminocyclopropane-1-carboxylate synthase-like protein 1 (accs) from Takifugu rubripes (Japanese pufferfish).